The chain runs to 133 residues: Small ribosomal subunit protein uS8 (133 aa).

This sequence belongs to the universal ribosomal protein uS8 family. In terms of assembly, part of the 30S ribosomal subunit. Contacts proteins S5 and S12.

One of the primary rRNA binding proteins, it binds directly to 16S rRNA central domain where it helps coordinate assembly of the platform of the 30S subunit. In Prochlorococcus marinus (strain MIT 9515), this protein is Small ribosomal subunit protein uS8.